The following is a 200-amino-acid chain: Molybdenum cofactor guanylyltransferase (200 aa).

GTP contacts are provided by residues 10-12 (LAG), lysine 23, asparagine 51, aspartate 69, and aspartate 99. Aspartate 99 provides a ligand contact to Mg(2+).

Belongs to the MobA family. Monomer. Mg(2+) is required as a cofactor.

Its subcellular location is the cytoplasm. The enzyme catalyses Mo-molybdopterin + GTP + H(+) = Mo-molybdopterin guanine dinucleotide + diphosphate. Functionally, transfers a GMP moiety from GTP to Mo-molybdopterin (Mo-MPT) cofactor (Moco or molybdenum cofactor) to form Mo-molybdopterin guanine dinucleotide (Mo-MGD) cofactor. The sequence is that of Molybdenum cofactor guanylyltransferase from Shewanella halifaxensis (strain HAW-EB4).